The following is a 61-amino-acid chain: Metallothionein-1A (61 aa).

Position 1 is an N-acetylmethionine (methionine 1). The tract at residues 1-29 (MDPNCSCPTGGSCSCAGSCTCKACRCTSC) is beta. Cysteine 5, cysteine 7, cysteine 13, cysteine 15, cysteine 19, cysteine 21, cysteine 24, cysteine 26, cysteine 29, cysteine 33, cysteine 34, cysteine 36, cysteine 37, cysteine 41, cysteine 44, cysteine 48, cysteine 50, and cysteine 57 together coordinate a divalent metal cation. The segment at 30-61 (KKSCCSCCPAGCARCAQGCICKGASDKCSCCA) is alpha. Serine 58 carries the phosphoserine modification. A divalent metal cation-binding residues include cysteine 59 and cysteine 60.

It belongs to the metallothionein superfamily. Type 1 family. Monomer.

In terms of biological role, metallothioneins have a high content of cysteine residues that bind various heavy metals; these proteins are transcriptionally regulated by both heavy metals and glucocorticoids. This chain is Metallothionein-1A (MT1A), found in Sus scrofa (Pig).